The sequence spans 60 residues: Large ribosomal subunit protein uL30 (60 aa).

It belongs to the universal ribosomal protein uL30 family. Part of the 50S ribosomal subunit.

In Nocardioides sp. (strain ATCC BAA-499 / JS614), this protein is Large ribosomal subunit protein uL30.